The sequence spans 214 residues: ATP-dependent dethiobiotin synthetase BioD (214 aa).

10–15 serves as a coordination point for ATP; that stretch reads GIGKTY. Position 14 (T14) interacts with Mg(2+). K35 is an active-site residue. T39 lines the substrate pocket. Residues D44, 109–112, and 169–170 contribute to the ATP site; these read EGAG and NC. The Mg(2+) site is built by D44 and E109.

It belongs to the dethiobiotin synthetase family. As to quaternary structure, homodimer. Mg(2+) serves as cofactor.

The protein localises to the cytoplasm. The enzyme catalyses (7R,8S)-7,8-diammoniononanoate + CO2 + ATP = (4R,5S)-dethiobiotin + ADP + phosphate + 3 H(+). Its pathway is cofactor biosynthesis; biotin biosynthesis; biotin from 7,8-diaminononanoate: step 1/2. Functionally, catalyzes a mechanistically unusual reaction, the ATP-dependent insertion of CO2 between the N7 and N8 nitrogen atoms of 7,8-diaminopelargonic acid (DAPA, also called 7,8-diammoniononanoate) to form a ureido ring. In Methanocaldococcus jannaschii (strain ATCC 43067 / DSM 2661 / JAL-1 / JCM 10045 / NBRC 100440) (Methanococcus jannaschii), this protein is ATP-dependent dethiobiotin synthetase BioD.